Consider the following 154-residue polypeptide: Endoribonuclease YbeY (154 aa).

Residues His114, His118, and His124 each coordinate Zn(2+).

This sequence belongs to the endoribonuclease YbeY family. The cofactor is Zn(2+).

The protein localises to the cytoplasm. Single strand-specific metallo-endoribonuclease involved in late-stage 70S ribosome quality control and in maturation of the 3' terminus of the 16S rRNA. The protein is Endoribonuclease YbeY of Haemophilus influenzae (strain ATCC 51907 / DSM 11121 / KW20 / Rd).